The following is a 372-amino-acid chain: Innexin shaking-B (372 aa).

Over 1–21 (MLDIFRGLKNLVKVSHVKTDS) the chain is Cytoplasmic. Residues 22 to 42 (IVFRLHYSITVMILMSFSLII) form a helical membrane-spanning segment. Residues 43–110 (TTRQYVGNPI…PADKKHYKYY (68 aa)) lie on the Extracellular side of the membrane. The chain crosses the membrane as a helical span at residues 111-131 (QWVCFCLFFQAILFYTPRWLW). At 132 to 182 (KSWEGGKIHALIMDLDIGICSEAEKKQKKKLLLDYLWENLRYHNWWAYRYY) the chain is on the cytoplasmic side. The chain crosses the membrane as a helical span at residues 183–203 (VCELLALINVIGQMFLMNRFF). The Extracellular portion of the chain corresponds to 204–267 (DGEFITFGLK…ILPLNVVNEK (64 aa)). A helical membrane pass occupies residues 268-288 (IYIFLWFWFILLTFLTLLTLI). Topologically, residues 289-372 (YRVVIIFSPR…PGLKGEIQDA (84 aa)) are cytoplasmic.

Belongs to the pannexin family. In terms of assembly, monomer (isoform Lethal). In terms of tissue distribution, isoform Neural is expressed in synapses of giant fibers (GF), in a large thoracic cell in location of postsynaptic target and optic lobe lamina and medulla. Isoform Lethal is expressed in embryonic mesodermal derivatives. During metamorphosis, both isoforms are dynamically expressed in pupal nervous system.

The protein localises to the cell membrane. It localises to the cell junction. The protein resides in the gap junction. In terms of biological role, structural component of the gap junctions at electrical synapses in distal and mid-depth levels in the lamina. Isoform Lethal forms voltage sensitive intercellular channels through homotypic interactions. This is Innexin shaking-B (shakB) from Drosophila melanogaster (Fruit fly).